Reading from the N-terminus, the 721-residue chain is MNLQDELDELKIYMTIDKTTIQELNRCMAEKREEQLFRHHEDAGVKKSTPEKNEKAISEQTLEKVIELENRLKSFEKNSRKLKEESKKLKKENDFLKSHLQHYQEDSESRGKELEKLLRVSSSVEQDKSELQTKVTALEREVTTLRRQVAKAKALRDENEEVVNPEEKEHCPTDKAKSEMATTDVRAQHCDCKTTTTKVKFKAAKKKCSVGRHHTVLNHSIKVMSHVENLSKDGWEDMSEGSSDSETQTFQNLGTVIVETSQNIRPIENDGNQKETDQTEDSRAQQEVQTYSCEDLKAPQNTKKMTFQNKSGSLQKNLHSALPARVNREKCKTKPAQKSSSNTILLRERIVSLQQQNSLLQNARKAAESSAKEFKEANEKLLHQQQISDHRFQTSRQTIKLTLDLAELRKEKEDLLKKVESSSDITSLAEEVSRIMAPQIQVTTLGPSRSTDLEIKQLQCKLKNATNELTKQSSSVKSLKLELLAKDDHMKAMQEKMSRMERDITMKRHLIEDLKFRQKINSESNESFNEMLGTLEKKDLKMNLLISKLNDTETAMAQIKSAASEQLQGLALQSEQVLEGTQKKLLLANEKIEEFTVFVQALVNELQSDAHRTRQQVRELRQTQKSRHACKTSTHKAQTLAASILNISRSDLEEILHTGDEMEIEKTKIDAENDKDWMLYIQKLLQGQLPFASYLLEAVLGKIKENKKLTEGYFTVMKDIK.

Residues 52 to 164 are a coiled coil; it reads KNEKAISEQT…LRDENEEVVN (113 aa). Disordered stretches follow at residues 156–180 and 259–288; these read RDEN…KSEM and ETSQ…QQEV. 2 stretches are compositionally biased toward basic and acidic residues: residues 165-178 and 267-284; these read PEEK…KAKS and IEND…DSRA. Coiled-coil stretches lie at residues 345–515 and 573–626; these read LLRE…EDLK and QSEQ…TQKS. T658 bears the Phosphothreonine mark.

Interacts with CEP250 and CEP68. Interacts with NEK2; the interaction leads to phosphorylation of CNTLN. Post-translationally, phosphorylated directly or indirectly by NEK2.

The protein resides in the cytoplasm. The protein localises to the cytoskeleton. Its subcellular location is the microtubule organizing center. It is found in the centrosome. It localises to the centriole. Functionally, required for centrosome cohesion and recruitment of CEP68 to centrosomes. The polypeptide is Centlein (Rattus norvegicus (Rat)).